Here is a 114-residue protein sequence, read N- to C-terminus: Small ribosomal subunit protein uS14m (114 aa).

Belongs to the universal ribosomal protein uS14 family.

It is found in the mitochondrion. The sequence is that of Small ribosomal subunit protein uS14m (MRP2) from Eremothecium gossypii (strain ATCC 10895 / CBS 109.51 / FGSC 9923 / NRRL Y-1056) (Yeast).